Here is a 213-residue protein sequence, read N- to C-terminus: Orotate phosphoribosyltransferase (213 aa).

Lysine 26 provides a ligand contact to 5-phospho-alpha-D-ribose 1-diphosphate. Residue 34–35 (FF) participates in orotate binding. 5-phospho-alpha-D-ribose 1-diphosphate-binding positions include 72–73 (YK), arginine 99, lysine 100, lysine 103, histidine 105, and 124–132 (DDVITAGTA). The orotate site is built by threonine 128 and arginine 156.

This sequence belongs to the purine/pyrimidine phosphoribosyltransferase family. PyrE subfamily. Homodimer. The cofactor is Mg(2+).

The enzyme catalyses orotidine 5'-phosphate + diphosphate = orotate + 5-phospho-alpha-D-ribose 1-diphosphate. Its pathway is pyrimidine metabolism; UMP biosynthesis via de novo pathway; UMP from orotate: step 1/2. In terms of biological role, catalyzes the transfer of a ribosyl phosphate group from 5-phosphoribose 1-diphosphate to orotate, leading to the formation of orotidine monophosphate (OMP). The chain is Orotate phosphoribosyltransferase from Salmonella agona (strain SL483).